We begin with the raw amino-acid sequence, 910 residues long: Protein translocase subunit SecA 1 (910 aa).

ATP contacts are provided by residues Q86, 104-108 (GEGKT), and D512. Zn(2+) contacts are provided by C894, C896, C905, and H906.

It belongs to the SecA family. As to quaternary structure, monomer and homodimer. Part of the essential Sec protein translocation apparatus which comprises SecA, SecYEG and auxiliary proteins SecDF-YajC and YidC. It depends on Zn(2+) as a cofactor.

It localises to the cell inner membrane. The protein resides in the cytoplasm. The catalysed reaction is ATP + H2O + cellular proteinSide 1 = ADP + phosphate + cellular proteinSide 2.. Part of the Sec protein translocase complex. Interacts with the SecYEG preprotein conducting channel. Has a central role in coupling the hydrolysis of ATP to the transfer of proteins into and across the cell membrane, serving both as a receptor for the preprotein-SecB complex and as an ATP-driven molecular motor driving the stepwise translocation of polypeptide chains across the membrane. In Bordetella avium (strain 197N), this protein is Protein translocase subunit SecA 1.